A 248-amino-acid polypeptide reads, in one-letter code: Metallo-beta-lactamase type 2 (248 aa).

The N-terminal stretch at 1–21 (MKGLKGLLVLALGFTGLQVFG) is a signal peptide. Zn(2+)-binding residues include H97, H99, D101, H160, and C179. A substrate-binding site is contributed by K182. Residue H221 coordinates Zn(2+).

This sequence belongs to the metallo-beta-lactamase superfamily. Class-B beta-lactamase family. Monomer. Requires Zn(2+) as cofactor.

Its subcellular location is the periplasm. The catalysed reaction is a beta-lactam + H2O = a substituted beta-amino acid. Its function is as follows. Confers resistance to the different beta-lactams antibiotics (penicillin, cephalosporin and carbapenem) via the hydrolysis of the beta-lactam ring. This is Metallo-beta-lactamase type 2 (blaB7) from Elizabethkingia meningoseptica (Chryseobacterium meningosepticum).